Consider the following 366-residue polypeptide: Phospho-N-acetylmuramoyl-pentapeptide-transferase (366 aa).

The next 10 helical transmembrane spans lie at 27–47 (AALF…IASL), 71–91 (TPTM…LLWA), 93–113 (LSSI…AIGF), 138–158 (FVIA…AGAA), 174–194 (LMLN…VGAG), 205–225 (GLAI…AYLA), 245–265 (LAVI…FNAP), 268–288 (AIFM…TVAV), 297–317 (VIIG…VFWF), and 343–363 (QVVI…LSTL).

It belongs to the glycosyltransferase 4 family. MraY subfamily. It depends on Mg(2+) as a cofactor.

It is found in the cell inner membrane. The enzyme catalyses UDP-N-acetyl-alpha-D-muramoyl-L-alanyl-gamma-D-glutamyl-meso-2,6-diaminopimeloyl-D-alanyl-D-alanine + di-trans,octa-cis-undecaprenyl phosphate = di-trans,octa-cis-undecaprenyl diphospho-N-acetyl-alpha-D-muramoyl-L-alanyl-D-glutamyl-meso-2,6-diaminopimeloyl-D-alanyl-D-alanine + UMP. Its pathway is cell wall biogenesis; peptidoglycan biosynthesis. In terms of biological role, catalyzes the initial step of the lipid cycle reactions in the biosynthesis of the cell wall peptidoglycan: transfers peptidoglycan precursor phospho-MurNAc-pentapeptide from UDP-MurNAc-pentapeptide onto the lipid carrier undecaprenyl phosphate, yielding undecaprenyl-pyrophosphoryl-MurNAc-pentapeptide, known as lipid I. The polypeptide is Phospho-N-acetylmuramoyl-pentapeptide-transferase (Sinorhizobium medicae (strain WSM419) (Ensifer medicae)).